The sequence spans 423 residues: Exodeoxyribonuclease 7 large subunit (423 aa).

It belongs to the XseA family. In terms of assembly, heterooligomer composed of large and small subunits.

The protein resides in the cytoplasm. It catalyses the reaction Exonucleolytic cleavage in either 5'- to 3'- or 3'- to 5'-direction to yield nucleoside 5'-phosphates.. Functionally, bidirectionally degrades single-stranded DNA into large acid-insoluble oligonucleotides, which are then degraded further into small acid-soluble oligonucleotides. This Natranaerobius thermophilus (strain ATCC BAA-1301 / DSM 18059 / JW/NM-WN-LF) protein is Exodeoxyribonuclease 7 large subunit.